We begin with the raw amino-acid sequence, 126 residues long: Fumarate reductase subunit C (126 aa).

3 helical membrane passes run 30 to 50, 64 to 84, and 105 to 125; these read IFVA…GAGG, VVVV…VTWF, and VLAG…WMVL.

It belongs to the FrdC family. In terms of assembly, part of an enzyme complex containing four subunits: a flavoprotein (FrdA), an iron-sulfur protein (FrdB), and two hydrophobic anchor proteins (FrdC and FrdD).

The protein localises to the cell membrane. In terms of biological role, anchors the catalytic components of the fumarate reductase complex to the cell membrane, binds quinones. This Mycobacterium tuberculosis (strain ATCC 25177 / H37Ra) protein is Fumarate reductase subunit C.